The chain runs to 1157 residues: DNA-directed RNA polymerase subunit beta (1157 aa).

This sequence belongs to the RNA polymerase beta chain family. In terms of assembly, the RNAP catalytic core consists of 2 alpha, 1 beta, 1 beta' and 1 omega subunit. When a sigma factor is associated with the core the holoenzyme is formed, which can initiate transcription.

The enzyme catalyses RNA(n) + a ribonucleoside 5'-triphosphate = RNA(n+1) + diphosphate. Functionally, DNA-dependent RNA polymerase catalyzes the transcription of DNA into RNA using the four ribonucleoside triphosphates as substrates. This chain is DNA-directed RNA polymerase subunit beta, found in Tropheryma whipplei (strain Twist) (Whipple's bacillus).